A 165-amino-acid chain; its full sequence is Phosphopantetheine adenylyltransferase (165 aa).

T10 is a substrate binding site. ATP-binding positions include 10–11 (TF) and H18. Residues K42, L75, and R89 each contribute to the substrate site. Residues 90 to 92 (GVR), E100, and 125 to 131 (VSFISSS) each bind ATP.

This sequence belongs to the bacterial CoaD family. In terms of assembly, homohexamer. The cofactor is Mg(2+).

The protein localises to the cytoplasm. It carries out the reaction (R)-4'-phosphopantetheine + ATP + H(+) = 3'-dephospho-CoA + diphosphate. Its pathway is cofactor biosynthesis; coenzyme A biosynthesis; CoA from (R)-pantothenate: step 4/5. Its function is as follows. Reversibly transfers an adenylyl group from ATP to 4'-phosphopantetheine, yielding dephospho-CoA (dPCoA) and pyrophosphate. The polypeptide is Phosphopantetheine adenylyltransferase (Buchnera aphidicola subsp. Schizaphis graminum (strain Sg)).